Here is a 1041-residue protein sequence, read N- to C-terminus: Cullin-associated NEDD8-dissociated protein 1, C-terminal part (1041 aa).

Disordered regions lie at residues 1 to 24 (MSSD…ELRE) and 64 to 103 (DMGE…EGGY). Basic and acidic residues predominate over residues 9–24 (YSHDDEHDPQTDELRE). Residues 65–103 (MGEDEEMSGTQDDGSEDDVTEEPDLEDDDFEDFEEEGGY) show a composition bias toward acidic residues. Residues 138–176 (SLYQQIAPAIVARFNKEREESVKLELVSTMDALVRKTAE) form an HEAT 1 repeat. Positions 189–237 (SVGSGSKISRKRRRQDSDASMIDFEPSMGTSSAAGTPLAAPSSPQSGPQ) are disordered. A compositionally biased stretch (low complexity) spans 225-237 (PLAAPSSPQSGPQ). HEAT repeat units lie at residues 242–279 (NALP…VRYG), 339–376 (PFLI…ALTP), 434–472 (LSFE…LCSR), 479–516 (NWVR…NPNT), 525–560 (MKNL…GNAQ), 598–637 (GSGL…NVGV), 670–708 (GASC…GNVK), 710–744 (YLPT…MVRR), 780–817 (LDPP…DSRD), and 822–867 (VLRP…HLGE).

Belongs to the CAND family. As to quaternary structure, interacts with candA-N. Interacts with unneddylated cullins culA and culD.

It localises to the nucleus. In terms of biological role, assembly factor of SCF (SKP1-CUL1-F-box protein) E3 ubiquitin ligase complexes that promotes the exchange of the substrate-recognition F-box subunit in SCF complexes, thereby playing a key role in the cellular repertoire of SCF complexes. Acts as a F-box protein exchange factor when interacting with candA-N. The chain is Cullin-associated NEDD8-dissociated protein 1, C-terminal part (candA-C) from Emericella nidulans (strain FGSC A4 / ATCC 38163 / CBS 112.46 / NRRL 194 / M139) (Aspergillus nidulans).